A 409-amino-acid chain; its full sequence is Serine/threonine transporter SstT (409 aa).

A run of 8 helical transmembrane segments spans residues 24-44 (LALG…AGLF), 48-68 (FVGA…AATI), 82-102 (IIVL…IAGM), 142-162 (AIAN…GAAL), 194-214 (LGIF…ALAG), 218-238 (LLAV…PAIV), 292-312 (IPLG…VLAM), and 319-339 (GITV…VSAC).

This sequence belongs to the dicarboxylate/amino acid:cation symporter (DAACS) (TC 2.A.23) family.

It localises to the cell inner membrane. The enzyme catalyses L-serine(in) + Na(+)(in) = L-serine(out) + Na(+)(out). The catalysed reaction is L-threonine(in) + Na(+)(in) = L-threonine(out) + Na(+)(out). Involved in the import of serine and threonine into the cell, with the concomitant import of sodium (symport system). The sequence is that of Serine/threonine transporter SstT from Neisseria meningitidis serogroup B (strain ATCC BAA-335 / MC58).